The chain runs to 100 residues: Aspartyl/glutamyl-tRNA(Asn/Gln) amidotransferase subunit C (100 aa).

The protein belongs to the GatC family. As to quaternary structure, heterotrimer of A, B and C subunits.

It carries out the reaction L-glutamyl-tRNA(Gln) + L-glutamine + ATP + H2O = L-glutaminyl-tRNA(Gln) + L-glutamate + ADP + phosphate + H(+). The enzyme catalyses L-aspartyl-tRNA(Asn) + L-glutamine + ATP + H2O = L-asparaginyl-tRNA(Asn) + L-glutamate + ADP + phosphate + 2 H(+). Allows the formation of correctly charged Asn-tRNA(Asn) or Gln-tRNA(Gln) through the transamidation of misacylated Asp-tRNA(Asn) or Glu-tRNA(Gln) in organisms which lack either or both of asparaginyl-tRNA or glutaminyl-tRNA synthetases. The reaction takes place in the presence of glutamine and ATP through an activated phospho-Asp-tRNA(Asn) or phospho-Glu-tRNA(Gln). This is Aspartyl/glutamyl-tRNA(Asn/Gln) amidotransferase subunit C from Corynebacterium aurimucosum (strain ATCC 700975 / DSM 44827 / CIP 107346 / CN-1) (Corynebacterium nigricans).